Here is a 339-residue protein sequence, read N- to C-terminus: DNA-directed RNA polymerase subunit alpha (339 aa).

The segment at methionine 1–glutamate 233 is alpha N-terminal domain (alpha-NTD). The interval lysine 264–phenylalanine 339 is alpha C-terminal domain (alpha-CTD).

It belongs to the RNA polymerase alpha chain family. In terms of assembly, in plastids the minimal PEP RNA polymerase catalytic core is composed of four subunits: alpha, beta, beta', and beta''. When a (nuclear-encoded) sigma factor is associated with the core the holoenzyme is formed, which can initiate transcription.

It localises to the plastid. It is found in the chloroplast. The enzyme catalyses RNA(n) + a ribonucleoside 5'-triphosphate = RNA(n+1) + diphosphate. Functionally, DNA-dependent RNA polymerase catalyzes the transcription of DNA into RNA using the four ribonucleoside triphosphates as substrates. This is DNA-directed RNA polymerase subunit alpha from Elymus hystrix (Eastern bottlebrush grass).